We begin with the raw amino-acid sequence, 213 residues long: Adenylate kinase (213 aa).

14–19 (GSGKGT) contributes to the ATP binding site. The segment at 34 to 63 (SSGNLLRSAIKASTPLGIKASEYIDEGQLV) is NMP. Residues serine 35, arginine 40, 61–63 (QLV), 89–92 (GFPR), and glutamine 96 each bind AMP. An LID region spans residues 129–162 (SRFICPSCNFVYNQSQGFRECPTCHSELVRRSDD). Arginine 130 contributes to the ATP binding site. Cysteine 133 and cysteine 136 together coordinate Zn(2+). An ATP-binding site is contributed by 139 to 140 (VY). Zn(2+)-binding residues include cysteine 149 and cysteine 152. AMP contacts are provided by arginine 159 and arginine 170. Lysine 198 contacts ATP.

The protein belongs to the adenylate kinase family. Monomer.

The protein resides in the cytoplasm. The enzyme catalyses AMP + ATP = 2 ADP. It participates in purine metabolism; AMP biosynthesis via salvage pathway; AMP from ADP: step 1/1. Its function is as follows. Catalyzes the reversible transfer of the terminal phosphate group between ATP and AMP. Plays an important role in cellular energy homeostasis and in adenine nucleotide metabolism. In Chlamydia felis (strain Fe/C-56) (Chlamydophila felis), this protein is Adenylate kinase.